The chain runs to 20 residues: MLLHRLSKFCKIERDIVYIS.

In terms of tissue distribution, lateral root initiations.

Regulatory peptide encoded by the primary transcript (pri-miR171b) of the microRNA miR171b that enhances the accumulation of its corresponding mature miRNA. Acts probably as a transcriptional activator of its corresponding pri-miRNA. Has no effect on the accumulation of other miRNAs. Addition of synthetic miPEP171b increases the abundance of miR171b, with consequent reduction of lateral root formation. In Medicago truncatula (Barrel medic), this protein is Peptide encoded by miPEP171b.